The following is a 411-amino-acid chain: Glutamate dehydrogenase A (411 aa).

K102 is a catalytic residue.

It belongs to the Glu/Leu/Phe/Val dehydrogenases family.

The catalysed reaction is L-glutamate + NAD(+) + H2O = 2-oxoglutarate + NH4(+) + NADH + H(+). It carries out the reaction L-glutamate + NADP(+) + H2O = 2-oxoglutarate + NH4(+) + NADPH + H(+). The protein is Glutamate dehydrogenase A (GDHA) of Nicotiana plumbaginifolia (Leadwort-leaved tobacco).